The following is a 425-amino-acid chain: Serine--tRNA ligase (425 aa).

229–231 (TAE) is an L-serine binding site. 260–262 (RSE) contributes to the ATP binding site. E283 contributes to the L-serine binding site. Residue 347-350 (EISS) coordinates ATP. An L-serine-binding site is contributed by S384.

It belongs to the class-II aminoacyl-tRNA synthetase family. Type-1 seryl-tRNA synthetase subfamily. In terms of assembly, homodimer. The tRNA molecule binds across the dimer.

The protein localises to the cytoplasm. It catalyses the reaction tRNA(Ser) + L-serine + ATP = L-seryl-tRNA(Ser) + AMP + diphosphate + H(+). The catalysed reaction is tRNA(Sec) + L-serine + ATP = L-seryl-tRNA(Sec) + AMP + diphosphate + H(+). It functions in the pathway aminoacyl-tRNA biosynthesis; selenocysteinyl-tRNA(Sec) biosynthesis; L-seryl-tRNA(Sec) from L-serine and tRNA(Sec): step 1/1. Functionally, catalyzes the attachment of serine to tRNA(Ser). Is also able to aminoacylate tRNA(Sec) with serine, to form the misacylated tRNA L-seryl-tRNA(Sec), which will be further converted into selenocysteinyl-tRNA(Sec). This is Serine--tRNA ligase from Rhizorhabdus wittichii (strain DSM 6014 / CCUG 31198 / JCM 15750 / NBRC 105917 / EY 4224 / RW1) (Sphingomonas wittichii).